We begin with the raw amino-acid sequence, 400 residues long: Exodeoxyribonuclease 7 large subunit (400 aa).

Belongs to the XseA family. Heterooligomer composed of large and small subunits.

The protein localises to the cytoplasm. It catalyses the reaction Exonucleolytic cleavage in either 5'- to 3'- or 3'- to 5'-direction to yield nucleoside 5'-phosphates.. Its function is as follows. Bidirectionally degrades single-stranded DNA into large acid-insoluble oligonucleotides, which are then degraded further into small acid-soluble oligonucleotides. The polypeptide is Exodeoxyribonuclease 7 large subunit (Clostridium perfringens (strain SM101 / Type A)).